A 248-amino-acid polypeptide reads, in one-letter code: MTEGARSTIDQGEVNRFSAMAAEWWSPTGKFKPLHKFNPVRLGYIRDKACENFGRDPKSARPLEGLRVLDIGCGGGLLSEPVARMGASVVGADPSEKNIGIASTHAKASGVSVDYRAVTAEELAEAGETFDIVLNMEVVEHVADVELFMTTCAKMVRPGGLIFVATINRTMKAAALAIFAAENILRWLPRGTHQYEKLVRPEELEKPLAASGLEITDRTGVFFNPLSNQWKLSRDMDVNYMLLAKRPA.

S-adenosyl-L-methionine contacts are provided by R41, G72, D93, and M136.

Belongs to the methyltransferase superfamily. UbiG/COQ3 family.

It catalyses the reaction a 3-demethylubiquinol + S-adenosyl-L-methionine = a ubiquinol + S-adenosyl-L-homocysteine + H(+). It carries out the reaction a 3-(all-trans-polyprenyl)benzene-1,2-diol + S-adenosyl-L-methionine = a 2-methoxy-6-(all-trans-polyprenyl)phenol + S-adenosyl-L-homocysteine + H(+). The protein operates within cofactor biosynthesis; ubiquinone biosynthesis. Functionally, O-methyltransferase that catalyzes the 2 O-methylation steps in the ubiquinone biosynthetic pathway. This is Ubiquinone biosynthesis O-methyltransferase from Rhizobium etli (strain ATCC 51251 / DSM 11541 / JCM 21823 / NBRC 15573 / CFN 42).